An 875-amino-acid polypeptide reads, in one-letter code: SPbeta prophage-derived uncharacterized protein YomG (875 aa).

Residues 351 to 381 (AKKAEISRINSQITNISQEIEKLKDRLSMDK) are a coiled coil. A Fibronectin type-III domain is found at 537–648 (PVANPTILNN…SIDSSGRILS (112 aa)).

This is SPbeta prophage-derived uncharacterized protein YomG (yomG) from Bacillus subtilis (strain 168).